Reading from the N-terminus, the 261-residue chain is Sulfur carrier protein FdhD (261 aa).

The Cysteine persulfide intermediate role is filled by Cys-105. 245–250 (FIRGDR) serves as a coordination point for Mo-bis(molybdopterin guanine dinucleotide).

It belongs to the FdhD family.

Its subcellular location is the cytoplasm. Functionally, required for formate dehydrogenase (FDH) activity. Acts as a sulfur carrier protein that transfers sulfur from IscS to the molybdenum cofactor prior to its insertion into FDH. The polypeptide is Sulfur carrier protein FdhD (Listeria monocytogenes serotype 4b (strain F2365)).